Consider the following 736-residue polypeptide: Factor of DNA methylation 4 (736 aa).

2 stretches are compositionally biased toward basic and acidic residues: residues 80-90 (RKYLRPRERPR) and 144-167 (DSGR…SNED). The disordered stretch occupies residues 80 to 167 (RKYLRPRERP…KPDPFFSNED (88 aa)). A coiled-coil region spans residues 360–597 (TLVSNLENTL…RSMRELTTRA (238 aa)).

Acts in association with FDM3 and FDM5 for RNA-directed DNA methylation (RdDM). The polypeptide is Factor of DNA methylation 4 (Arabidopsis thaliana (Mouse-ear cress)).